The primary structure comprises 211 residues: Uracil phosphoribosyltransferase (211 aa).

5-phospho-alpha-D-ribose 1-diphosphate is bound by residues arginine 78, arginine 103, and 130–138; that span reads DPMLATGGT. Residues isoleucine 195 and 200–202 each bind uracil; that span reads GDA. A 5-phospho-alpha-D-ribose 1-diphosphate-binding site is contributed by aspartate 201.

This sequence belongs to the UPRTase family. Mg(2+) is required as a cofactor.

The enzyme catalyses UMP + diphosphate = 5-phospho-alpha-D-ribose 1-diphosphate + uracil. It functions in the pathway pyrimidine metabolism; UMP biosynthesis via salvage pathway; UMP from uracil: step 1/1. With respect to regulation, allosterically activated by GTP. Functionally, catalyzes the conversion of uracil and 5-phospho-alpha-D-ribose 1-diphosphate (PRPP) to UMP and diphosphate. The sequence is that of Uracil phosphoribosyltransferase from Kocuria rhizophila (strain ATCC 9341 / DSM 348 / NBRC 103217 / DC2201).